The sequence spans 461 residues: Cysteine--tRNA ligase (461 aa).

Cys30 contributes to the Zn(2+) binding site. The 'HIGH' region signature appears at 32–42; it reads PTVYSYAHIGN. The Zn(2+) site is built by Cys212, His237, and Glu241. The short motif at 270–274 is the 'KMSKS' region element; it reads KMSKS. Lys273 contacts ATP.

The protein belongs to the class-I aminoacyl-tRNA synthetase family. As to quaternary structure, monomer. Zn(2+) serves as cofactor.

The protein localises to the cytoplasm. The enzyme catalyses tRNA(Cys) + L-cysteine + ATP = L-cysteinyl-tRNA(Cys) + AMP + diphosphate. This is Cysteine--tRNA ligase from Maricaulis maris (strain MCS10) (Caulobacter maris).